A 406-amino-acid polypeptide reads, in one-letter code: Tryptophan synthase beta chain (406 aa).

An N6-(pyridoxal phosphate)lysine modification is found at lysine 95.

It belongs to the TrpB family. Tetramer of two alpha and two beta chains. It depends on pyridoxal 5'-phosphate as a cofactor.

It catalyses the reaction (1S,2R)-1-C-(indol-3-yl)glycerol 3-phosphate + L-serine = D-glyceraldehyde 3-phosphate + L-tryptophan + H2O. It functions in the pathway amino-acid biosynthesis; L-tryptophan biosynthesis; L-tryptophan from chorismate: step 5/5. Functionally, the beta subunit is responsible for the synthesis of L-tryptophan from indole and L-serine. This chain is Tryptophan synthase beta chain, found in Pseudomonas fluorescens (strain ATCC BAA-477 / NRRL B-23932 / Pf-5).